A 370-amino-acid polypeptide reads, in one-letter code: Ubiquinone biosynthesis O-methyltransferase, mitochondrial (370 aa).

A mitochondrion-targeting transit peptide spans 1 to 86 (MWGGSKLSSS…SYRLPWTRPY (86 aa)). R125 is an S-adenosyl-L-methionine binding site. Residues K144 and K150 each carry the N6-acetyllysine modification. Residues G155 and D176 each contribute to the S-adenosyl-L-methionine site. K197 carries the N6-acetyllysine modification. Residue S223 participates in S-adenosyl-L-methionine binding. 3 residues coordinate Mg(2+): E224, E227, and H228.

Belongs to the class I-like SAM-binding methyltransferase superfamily. UbiG/COQ3 family. Component of a multi-subunit COQ enzyme complex, composed of at least COQ3, COQ4, COQ5, COQ6, COQ7 and COQ9. Mg(2+) serves as cofactor.

It is found in the mitochondrion inner membrane. The catalysed reaction is 3,4-dihydroxy-5-(all-trans-decaprenyl)benzoate + S-adenosyl-L-methionine = 4-hydroxy-3-methoxy-5-(all-trans-decaprenyl)benzoate + S-adenosyl-L-homocysteine + H(+). The enzyme catalyses a 3-demethylubiquinone + S-adenosyl-L-methionine = a ubiquinone + S-adenosyl-L-homocysteine. It catalyses the reaction 3-demethylubiquinol-10 + S-adenosyl-L-methionine = ubiquinol-10 + S-adenosyl-L-homocysteine + H(+). The protein operates within cofactor biosynthesis; ubiquinone biosynthesis. In terms of biological role, O-methyltransferase required for two non-consecutive steps during ubiquinone biosynthesis. Catalyzes the 2 O-methylation of 3,4-dihydroxy-5-(all-trans-decaprenyl)benzoic acid into 4-hydroxy-3-methoxy-5-(all-trans-decaprenyl)benzoic acid. Also catalyzes the last step of ubiquinone biosynthesis by mediating methylation of 3-demethylubiquinone into ubiquinone. Also able to mediate the methylation of 3-demethylubiquinol-10 into ubiquinol-10. This is Ubiquinone biosynthesis O-methyltransferase, mitochondrial from Bos taurus (Bovine).